The following is a 346-amino-acid chain: MADEEGETEVQEMEVDRRESDESADDEAKEKPDRVDGGVKNGEVPLGEADAPVDIETINLDPEAEDVDLNHFKIGKIQGFEVLKKVKTLCLRQNLIKLIENLEQLVTLTELDLYDNQIRKIGNLETLRDLQILDLSFNLLRRIEGLESLSHLQRLYLVNNKISRIENFGTLTQLRLLELGSNRLRVIENLDSLRELDSLFLGKNKITKLQNLETLTNLTVLSVQSNRLTKIEGLQNLVNLRELYLSDNGIQVIEGLENNNKLTTLDLASNRIKRIENIKHLSELQEFWMNDNLVENWSDLEELSGAPGLQTVYLERNPLQKDAQYRRKIMLALPSVRQIDATFVRF.

Acidic residues predominate over residues 1-13; that stretch reads MADEEGETEVQEM. Residues 1 to 46 form a disordered region; sequence MADEEGETEVQEMEVDRRESDESADDEAKEKPDRVDGGVKNGEVPL. Positions 14-37 are enriched in basic and acidic residues; that stretch reads EVDRRESDESADDEAKEKPDRVDG. 11 LRR repeats span residues 63-84, 85-106, 107-128, 129-150, 151-172, 173-194, 195-216, 217-238, 239-260, 261-282, and 283-304; these read EAEDVDLNHFKIGKIQGFEVLK, KVKTLCLRQNLIKLIENLEQLV, TLTELDLYDNQIRKIGNLETLR, DLQILDLSFNLLRRIEGLESLS, HLQRLYLVNNKISRIENFGTLT, QLRLLELGSNRLRVIENLDSLR, ELDSLFLGKNKITKLQNLETLT, NLTVLSVQSNRLTKIEGLQNLV, NLRELYLSDNGIQVIEGLENNN, KLTTLDLASNRIKRIENIKHLS, and ELQEFWMNDNLVENWSDLEELS. Positions 317 to 346 constitute an LRRCT domain; it reads NPLQKDAQYRRKIMLALPSVRQIDATFVRF.

It belongs to the SDS22 family.

It localises to the nucleus. Functionally, regulatory subunit of protein phosphatase 1. This is Protein phosphatase 1 regulatory subunit 7 (ppp1r7) from Xenopus tropicalis (Western clawed frog).